Consider the following 816-residue polypeptide: Subtilisin-like protease SBT2.6 (816 aa).

The signal sequence occupies residues 1–19 (MDIGCKVLVFFTCFLTVTA). The propeptide at 20–126 (EIYIVTMEGE…VDRDWKVRKL (107 aa)) is activation peptide. An Inhibitor I9 domain is found at 22-124 (YIVTMEGEPI…KSVDRDWKVR (103 aa)). In terms of domain architecture, Peptidase S8 spans 120 to 672 (DWKVRKLTTH…SGHVNPSAAL (553 aa)). Catalysis depends on charge relay system residues aspartate 160 and histidine 235. The 75-residue stretch at 418-492 (DCQKPEVLNK…SCIPGILITD (75 aa)) folds into the PA domain. Asparagine 504 and asparagine 578 each carry an N-linked (GlcNAc...) asparagine glycan. The Charge relay system role is filled by serine 597. Asparagine 702 is a glycosylation site (N-linked (GlcNAc...) asparagine).

This sequence belongs to the peptidase S8 family.

Its subcellular location is the secreted. The polypeptide is Subtilisin-like protease SBT2.6 (Arabidopsis thaliana (Mouse-ear cress)).